Here is an 82-residue protein sequence, read N- to C-terminus: Protein Vpu (82 aa).

Residues 1–7 (MQPIPIV) lie on the Extracellular side of the membrane. Residues 8–28 (AIVALVVAIIIAIVVWSIVII) form a helical membrane-spanning segment. The Cytoplasmic portion of the chain corresponds to 29–82 (EYRKILRQRKIDRLIDRLIERAEDSGNESEGEISALVEMGVEMGHHAPWDVDDL). 2 positions are modified to phosphoserine; by host CK2: S53 and S57.

Belongs to the HIV-1 VPU protein family. Homopentamer. Interacts with host CD4 and BRTC; these interactions induce proteasomal degradation of CD4. Interacts (via transmembrane region) with host BST2 (via transmembrane region); this interaction leads to the degradation of host BST2. Interacts with host FBXW11. Interacts with host AP1M1; this interaction plays a role in the mistrafficking and subsequent degradation of host BST2. Interacts with host RANBP2; this interaction allows Vpu to down-regulate host BLM sumoylation. Phosphorylated by host CK2. This phosphorylation is necessary for interaction with human BTRC and degradation of CD4.

It localises to the host membrane. With respect to regulation, ion channel activity is inhibited by hexamethylene amiloride in vitro. Functionally, enhances virion budding by targeting host CD4 and Tetherin/BST2 to proteasome degradation. Degradation of CD4 prevents any unwanted premature interactions between viral Env and its host receptor CD4 in the endoplasmic reticulum. Degradation of antiretroviral protein Tetherin/BST2 is important for virion budding, as BST2 tethers new viral particles to the host cell membrane. Mechanistically, Vpu bridges either CD4 or BST2 to BTRC, a substrate recognition subunit of the Skp1/Cullin/F-box protein E3 ubiquitin ligase, induces their ubiquitination and subsequent proteasomal degradation. The alteration of the E3 ligase specificity by Vpu seems to promote the degradation of host IKBKB, leading to NF-kappa-B down-regulation and subsequent apoptosis. Acts as a viroporin that forms an oligomeric ion channel in membranes. Modulates the host DNA repair mechanisms to promote degradation of nuclear viral cDNA in cells that are already productively infected in order to suppress immune sensing and proviral hyper-integration (superinfection). Manipulates PML-NBs and modulates SUMOylation of host BLM protein thereby enhancing its DNA-end processing activity toward viral unintegrated linear DNA. Also inhibits RAD52-mediated homologous repair of viral cDNA, preventing the generation of dead-end circular forms of single copies of the long terminal repeat and permitting sustained nucleolytic attack. The sequence is that of Protein Vpu from Human immunodeficiency virus type 1 group M subtype B (isolate HXB2) (HIV-1).